Consider the following 492-residue polypeptide: GTPase Der (492 aa).

2 consecutive EngA-type G domains span residues 3 to 167 (PVVA…PAPE) and 188 to 363 (ICIA…AQYA). GTP contacts are provided by residues 9–16 (GRPNVGKS), 56–60 (DTGGF), 119–122 (NKVE), 194–201 (GRPNVGKS), 241–245 (DTAGI), and 306–309 (NKWD). Residues 364 to 448 (YRINTGLLNR…PIRLLFRAKT (85 aa)) enclose the KH-like domain. The tract at residues 464 to 492 (VEKKEKKTTRRKKERKEQSRRKRVRDLKG) is disordered. The span at 469–492 (KKTTRRKKERKEQSRRKRVRDLKG) shows a compositional bias: basic residues.

Belongs to the TRAFAC class TrmE-Era-EngA-EngB-Septin-like GTPase superfamily. EngA (Der) GTPase family. In terms of assembly, associates with the 50S ribosomal subunit.

GTPase that plays an essential role in the late steps of ribosome biogenesis. The chain is GTPase Der from Desulforapulum autotrophicum (strain ATCC 43914 / DSM 3382 / VKM B-1955 / HRM2) (Desulfobacterium autotrophicum).